The chain runs to 175 residues: Adenine phosphoribosyltransferase (175 aa).

Belongs to the purine/pyrimidine phosphoribosyltransferase family. As to quaternary structure, homodimer.

It localises to the cytoplasm. The enzyme catalyses AMP + diphosphate = 5-phospho-alpha-D-ribose 1-diphosphate + adenine. It functions in the pathway purine metabolism; AMP biosynthesis via salvage pathway; AMP from adenine: step 1/1. Catalyzes a salvage reaction resulting in the formation of AMP, that is energically less costly than de novo synthesis. This Lactobacillus delbrueckii subsp. bulgaricus (strain ATCC 11842 / DSM 20081 / BCRC 10696 / JCM 1002 / NBRC 13953 / NCIMB 11778 / NCTC 12712 / WDCM 00102 / Lb 14) protein is Adenine phosphoribosyltransferase.